Here is an 810-residue protein sequence, read N- to C-terminus: Soluble starch synthase 2-3, chloroplastic/amyloplastic (810 aa).

The N-terminal 16 residues, 1-16, are a transit peptide targeting the chloroplast; that stretch reads MSSAVVASSTTFLVAL. Disordered regions lie at residues 43-265 and 281-313; these read GRAG…PIPA and EPDA…SGPL. Residues 63-83 are compositionally biased toward basic and acidic residues; that stretch reads RDAGVVRRADDGENEAAVERA. Acidic residues predominate over residues 84–93; it reads GEDDEEEEEF. Positions 102–116 are enriched in basic residues; sequence RSRRGGVGKVLKRRG. The segment covering 129–148 has biased composition (low complexity); sequence DAARVRGAAAPAPAPTQDAA. A compositionally biased stretch (acidic residues) spans 281–310; it reads EPDAAEDGDDDDDWADSDASDSEIDQDDDS. Lys-333 is an ADP-alpha-D-glucose binding site.

Belongs to the glycosyltransferase 1 family. Bacterial/plant glycogen synthase subfamily. As to expression, expressed most exclusively in endosperm.

The protein resides in the plastid. The protein localises to the amyloplast. It is found in the chloroplast. The catalysed reaction is [(1-&gt;4)-alpha-D-glucosyl](n) + ADP-alpha-D-glucose = [(1-&gt;4)-alpha-D-glucosyl](n+1) + ADP + H(+). Its pathway is glycan biosynthesis; starch biosynthesis. Functionally, plays an important role during endosperm starch synthesis. Determines the type of amylopectin structure of starch grain. Synthesizes long B1 amylopectin chains by elongating short A and B1 chains, independently of the other soluble starch synthases. Barely active in japonica subspecies. This is Soluble starch synthase 2-3, chloroplastic/amyloplastic (SSII-3) from Oryza sativa subsp. indica (Rice).